The primary structure comprises 478 residues: Protein nucleotidyltransferase YdiU (478 aa).

The ATP site is built by G84, G86, R87, K107, D119, G120, R170, and R177. The active-site Proton acceptor is the D246. The Mg(2+) site is built by N247 and D256. Residue D256 coordinates ATP.

This sequence belongs to the SELO family. The cofactor is Mg(2+). Requires Mn(2+) as cofactor.

It carries out the reaction L-seryl-[protein] + ATP = 3-O-(5'-adenylyl)-L-seryl-[protein] + diphosphate. The catalysed reaction is L-threonyl-[protein] + ATP = 3-O-(5'-adenylyl)-L-threonyl-[protein] + diphosphate. It catalyses the reaction L-tyrosyl-[protein] + ATP = O-(5'-adenylyl)-L-tyrosyl-[protein] + diphosphate. The enzyme catalyses L-histidyl-[protein] + UTP = N(tele)-(5'-uridylyl)-L-histidyl-[protein] + diphosphate. It carries out the reaction L-seryl-[protein] + UTP = O-(5'-uridylyl)-L-seryl-[protein] + diphosphate. The catalysed reaction is L-tyrosyl-[protein] + UTP = O-(5'-uridylyl)-L-tyrosyl-[protein] + diphosphate. Its function is as follows. Nucleotidyltransferase involved in the post-translational modification of proteins. It can catalyze the addition of adenosine monophosphate (AMP) or uridine monophosphate (UMP) to a protein, resulting in modifications known as AMPylation and UMPylation. In Escherichia coli O17:K52:H18 (strain UMN026 / ExPEC), this protein is Protein nucleotidyltransferase YdiU.